We begin with the raw amino-acid sequence, 366 residues long: Peptide chain release factor 2 (366 aa).

Position 251 is an N5-methylglutamine (glutamine 251).

Belongs to the prokaryotic/mitochondrial release factor family. Post-translationally, methylated by PrmC. Methylation increases the termination efficiency of RF2.

Its subcellular location is the cytoplasm. Its function is as follows. Peptide chain release factor 2 directs the termination of translation in response to the peptide chain termination codons UGA and UAA. The chain is Peptide chain release factor 2 (prfB) from Listeria innocua serovar 6a (strain ATCC BAA-680 / CLIP 11262).